The sequence spans 310 residues: Nitric oxide synthase-interacting protein homolog (310 aa).

Polar residues predominate over residues 115–124 (FSAIESTPSR). The tract at residues 115–141 (FSAIESTPSRTGAVATPRPEVGSLKRQ) is disordered.

This sequence belongs to the NOSIP family.

The protein localises to the cytoplasm. It is found in the nucleus. Negatively regulates nitric oxide production by inducing nitric oxide synthase translocation to actin cytoskeleton and inhibiting its enzymatic activity. This is Nitric oxide synthase-interacting protein homolog from Caenorhabditis elegans.